The sequence spans 335 residues: Dolichyl-diphosphooligosaccharide--protein glycosyltransferase subunit MAGT1 (335 aa).

Positions 1–29 (MASPRWLWCVCATAAVTLLLVSKVPSASA) are cleaved as a signal peptide. Residues 30 to 184 (QRKKEKVLVE…DVNIRVIRPP (155 aa)) lie on the Extracellular side of the membrane. Residues 47–175 (WTNQRPVIRM…IARWIADRTD (129 aa)) form the Thioredoxin domain. N-linked (GlcNAc...) asparagine glycosylation occurs at N71. C87 and C90 are joined by a disulfide. The chain crosses the membrane as a helical span at residues 185 to 205 (NYAGPLMLGLLLAVIGGLVYL). The Cytoplasmic segment spans residues 206 to 209 (RRSN). The chain crosses the membrane as a helical span at residues 210–230 (MEFLFNKTGWAFAALCFVLAM). The Extracellular portion of the chain corresponds to 231 to 270 (TSGQMWNHIRGPPYAHKNPHTGHVNYIHGSSQAQFVAETH). A helical transmembrane segment spans residues 271–291 (IVLLFNGGVTLGMVLLCEAAA). The Cytoplasmic portion of the chain corresponds to 292–300 (SDMDIGKRR). A helical transmembrane segment spans residues 301–321 (MMCIAGIGLVVLFFSWMLSIF). Topologically, residues 322–335 (RSKYHGYPYSFLMS) are extracellular.

This sequence belongs to the OST3/OST6 family. Accessory component of the STT3B-containing form of the oligosaccharyltransferase (OST) complex. OST exists in two different complex forms which contain common core subunits RPN1, RPN2, OST48, OST4, DAD1 and TMEM258, either STT3A or STT3B as catalytic subunits, and form-specific accessory subunits. OST can form stable complexes with the Sec61 complex or with both the Sec61 and TRAP complexes. The association of TUSC3 or MAGT1 with the STT3B-containing complex seems to be mutually exclusvice.

The protein localises to the cell membrane. Its subcellular location is the endoplasmic reticulum. The protein resides in the endoplasmic reticulum membrane. It participates in protein modification; protein glycosylation. Accessory component of the STT3B-containing form of the N-oligosaccharyl transferase (OST) complex which catalyzes the transfer of a high mannose oligosaccharide from a lipid-linked oligosaccharide donor to an asparagine residue within an Asn-X-Ser/Thr consensus motif in nascent polypeptide chains. Involved in N-glycosylation of STT3B-dependent substrates. Specifically required for the glycosylation of a subset of acceptor sites that are near cysteine residues; in this function seems to act redundantly with TUSC3. In its oxidized form proposed to form transient mixed disulfides with a glycoprotein substrate to facilitate access of STT3B to the unmodified acceptor site. Also has oxidoreductase-independent functions in the STT3B-containing OST complex possibly involving substrate recognition. Could indirectly play a role in Mg(2+) transport in epithelial cells. This is Dolichyl-diphosphooligosaccharide--protein glycosyltransferase subunit MAGT1 from Rattus norvegicus (Rat).